The chain runs to 194 residues: MNLVLASTSPRRKELLTHIGLGRSDFTFEQVAPDIDETPRSGELPRDYVQRLAAEKAQAGLALCSDMSQPAVLGSDTIVVLENEILGKPVDDADAKRVLRALSGRAHTVMTAVALANANHTAMRLVETLVRFCVLSDADIDAYVASQEPMDKAGSYGIQGLGGCFVESIDGSYSCVVGLPLVETRQLLSEAGII.

The active-site Proton acceptor is the D76.

The protein belongs to the Maf family. YhdE subfamily. Requires a divalent metal cation as cofactor.

Its subcellular location is the cytoplasm. The catalysed reaction is dTTP + H2O = dTMP + diphosphate + H(+). It catalyses the reaction UTP + H2O = UMP + diphosphate + H(+). Functionally, nucleoside triphosphate pyrophosphatase that hydrolyzes dTTP and UTP. May have a dual role in cell division arrest and in preventing the incorporation of modified nucleotides into cellular nucleic acids. The chain is dTTP/UTP pyrophosphatase from Shewanella oneidensis (strain ATCC 700550 / JCM 31522 / CIP 106686 / LMG 19005 / NCIMB 14063 / MR-1).